The chain runs to 428 residues: MLCRSFNISQLAIPFVSVLISFLAYTSQLFFYYFEEAPLRSEEFWRLNIFAVCIWVCYYRACTVDPGRIPKDWTPPNLKQLEKDCAGGRQRWCRRCEAFKPPRAHHCKTCQRCIPKMDHHCPWTSNCVSHFTYPHFMRFLFYAVVGMGYLETLLFERASIVWASRHLPSYLGPGLGQLVHLFILLVVNSLTWLALFILLLRSIWSLALNTTTIESWEIERHETLLRRARHFGGYLSGPGGIQIRIKKQEFPYDIGIWSNIRAGMGGSANVLSWFWPFAATPDRSTGLEFEVNGFEDPNLSWPPPDPDRIPLPAKREDMSAAIAAADASYHRALQARNIQRSNDASHSGGHPIQRRKRFHDRFNENKAKERLSESESDFSDDEEVQDGEEGWKNSEGDRLRDFGVDEEAEFYDEEDIPLGILMQRRRQQ.

At 1 to 10 (MLCRSFNISQ) the chain is on the cytoplasmic side. The chain crosses the membrane as a helical span at residues 11 to 31 (LAIPFVSVLISFLAYTSQLFF). The Lumenal segment spans residues 32 to 43 (YYFEEAPLRSEE). Residues 44-61 (FWRLNIFAVCIWVCYYRA) form a helical membrane-spanning segment. Residues 62-134 (CTVDPGRIPK…SNCVSHFTYP (73 aa)) lie on the Cytoplasmic side of the membrane. In terms of domain architecture, DHHC spans 91–141 (RWCRRCEAFKPPRAHHCKTCQRCIPKMDHHCPWTSNCVSHFTYPHFMRFLF). C121 (S-palmitoyl cysteine intermediate) is an active-site residue. Residues 135-155 (HFMRFLFYAVVGMGYLETLLF) traverse the membrane as a helical segment. Over 156 to 177 (ERASIVWASRHLPSYLGPGLGQ) the chain is Lumenal. The chain crosses the membrane as a helical span at residues 178–198 (LVHLFILLVVNSLTWLALFIL). The Cytoplasmic segment spans residues 199 to 428 (LLRSIWSLAL…GILMQRRRQQ (230 aa)). The interval 339–400 (QRSNDASHSG…WKNSEGDRLR (62 aa)) is disordered. Basic and acidic residues predominate over residues 360-373 (DRFNENKAKERLSE). A compositionally biased stretch (acidic residues) spans 374-388 (SESDFSDDEEVQDGE). The span at 389 to 400 (EGWKNSEGDRLR) shows a compositional bias: basic and acidic residues.

The protein belongs to the DHHC palmitoyltransferase family. PFA4 subfamily.

It is found in the endoplasmic reticulum membrane. It carries out the reaction L-cysteinyl-[protein] + hexadecanoyl-CoA = S-hexadecanoyl-L-cysteinyl-[protein] + CoA. In terms of biological role, mediates the reversible addition of palmitate to target proteins, thereby regulating their membrane association and biological function. This Aspergillus fumigatus (strain ATCC MYA-4609 / CBS 101355 / FGSC A1100 / Af293) (Neosartorya fumigata) protein is Palmitoyltransferase pfa4.